The chain runs to 184 residues: CDP-archaeol synthase (184 aa).

The next 5 helical transmembrane spans lie at 4–24 (IIMV…NPGA), 54–74 (FIGG…IIYI), 86–106 (IISA…GDIT), 122–142 (GSLL…FIFA), and 145–165 (FFLE…LTPP).

This sequence belongs to the CDP-archaeol synthase family. It depends on Mg(2+) as a cofactor.

It localises to the cell membrane. The enzyme catalyses 2,3-bis-O-(geranylgeranyl)-sn-glycerol 1-phosphate + CTP + H(+) = CDP-2,3-bis-O-(geranylgeranyl)-sn-glycerol + diphosphate. It participates in membrane lipid metabolism; glycerophospholipid metabolism. In terms of biological role, catalyzes the formation of CDP-2,3-bis-(O-geranylgeranyl)-sn-glycerol (CDP-archaeol) from 2,3-bis-(O-geranylgeranyl)-sn-glycerol 1-phosphate (DGGGP) and CTP. This reaction is the third ether-bond-formation step in the biosynthesis of archaeal membrane lipids. The chain is CDP-archaeol synthase from Picrophilus torridus (strain ATCC 700027 / DSM 9790 / JCM 10055 / NBRC 100828 / KAW 2/3).